We begin with the raw amino-acid sequence, 241 residues long: Phosphatidylglycerophosphatase B (241 aa).

The chain crosses the membrane as a helical span at residues 1-21; that stretch reads MFKRLSLYTLLLCLVPFFIWG. At 22–52 the chain is on the periplasmic side; sequence ISYQWHGNSQLTQADYWLYLLTETGSVPYAL. The helical transmembrane segment at 53–62 threads the bilayer; that stretch reads ITCVLFTLLF. At 63–67 the chain is on the cytoplasmic side; sequence AFLFK. A helical membrane pass occupies residues 68-91; sequence NPKQWILGVIVMGISVIATQAAKT. Residues 92-158 lie on the Periplasmic side of the membrane; it reads GAKALFEEPR…ENETGYSFPS (67 aa). Residues 94–102 form a phosphatase sequence motif I region; it reads KALFEEPRP. Residues 157-160 form a phosphatase sequence motif II region; it reads PSGH. Residues 159–173 form a helical membrane-spanning segment; sequence GHTIFAATWLMLAVG. H160 acts as the Proton donor; for a subset of substrates in catalysis. Residues 174–184 lie on the Cytoplasmic side of the membrane; sequence FTQLLGNRSFK. Residues 185-204 traverse the membrane as a helical segment; that stretch reads AKLLVVGIAVWGLLMLISRV. The segment at 202–213 is phosphatase sequence motif III; it reads SRVRLGMHYPID. Residues 205-210 are Periplasmic-facing; the sequence is RLGMHY. The active-site Nucleophile is the H209. A helical membrane pass occupies residues 211–235; sequence PIDLLVATLLAWLINSIIFAFLKKK. Over 236-241 the chain is Cytoplasmic; sequence AIFVMK.

Belongs to the PA-phosphatase related phosphoesterase family.

The protein localises to the cell inner membrane. Its subcellular location is the cell outer membrane. It catalyses the reaction a 1,2-diacyl-sn-glycero-3-phospho-(1'-sn-glycero-3'-phosphate) + H2O = a 1,2-diacyl-sn-glycero-3-phospho-(1'-sn-glycerol) + phosphate. It carries out the reaction a 1,2-diacyl-sn-glycerol 3-diphosphate + H2O = a 1,2-diacyl-sn-glycero-3-phosphate + phosphate + H(+). The catalysed reaction is a 1,2-diacyl-sn-glycero-3-phosphate + H2O = a 1,2-diacyl-sn-glycerol + phosphate. The enzyme catalyses di-trans,octa-cis-undecaprenyl diphosphate + H2O = di-trans,octa-cis-undecaprenyl phosphate + phosphate + H(+). Its pathway is phospholipid metabolism; phosphatidylglycerol biosynthesis; phosphatidylglycerol from CDP-diacylglycerol: step 2/2. Functionally, catalyzes the dephosphorylation of diacylglycerol diphosphate (DGPP) to phosphatidate (PA) and the subsequent dephosphorylation of PA to diacylglycerol (DAG). Also has undecaprenyl pyrophosphate phosphatase activity, required for the biosynthesis of the lipid carrier undecaprenyl phosphate. Can also use lysophosphatidic acid (LPA) and phosphatidylglycerophosphate as substrates. The pattern of activities varies according to subcellular location, PGP phosphatase activity is higher in the cytoplasmic membrane, whereas PA and LPA phosphatase activities are higher in the outer membrane. Activity is independent of a divalent cation ion and insensitive to inhibition by N-ethylmaleimide. In Haemophilus influenzae (strain ATCC 51907 / DSM 11121 / KW20 / Rd), this protein is Phosphatidylglycerophosphatase B (pgpB).